Reading from the N-terminus, the 277-residue chain is Large ribosomal subunit protein uL2 (277 aa).

A disordered region spans residues 219-277; sequence TVRGSVMNPNDHPHGGGEGRAPIGRKSPMSPWGKPTLGFKTRKKKNKSDKFIVRRRKNK. The span at 258–277 shows a compositional bias: basic residues; that stretch reads KTRKKKNKSDKFIVRRRKNK.

Belongs to the universal ribosomal protein uL2 family. Part of the 50S ribosomal subunit. Forms a bridge to the 30S subunit in the 70S ribosome.

In terms of biological role, one of the primary rRNA binding proteins. Required for association of the 30S and 50S subunits to form the 70S ribosome, for tRNA binding and peptide bond formation. It has been suggested to have peptidyltransferase activity; this is somewhat controversial. Makes several contacts with the 16S rRNA in the 70S ribosome. The sequence is that of Large ribosomal subunit protein uL2 from Bacillus subtilis (strain 168).